A 48-amino-acid polypeptide reads, in one-letter code: Large ribosomal subunit protein bL33B (48 aa).

It belongs to the bacterial ribosomal protein bL33 family.

This is Large ribosomal subunit protein bL33B (rpmG2) from Mycoplasma pneumoniae (strain ATCC 29342 / M129 / Subtype 1) (Mycoplasmoides pneumoniae).